A 298-amino-acid polypeptide reads, in one-letter code: Ketohexokinase (298 aa).

The beta-D-fructose site is built by aspartate 15, glycine 41, asparagine 42, and asparagine 45. ATP contacts are provided by residues arginine 108, 226 to 229 (AEEG), and 255 to 258 (GAGD). Position 258 (aspartate 258) interacts with beta-D-fructose.

Belongs to the carbohydrate kinase PfkB family. As to quaternary structure, homodimer.

It carries out the reaction beta-D-fructose + ATP = beta-D-fructose 1-phosphate + ADP + H(+). The protein operates within carbohydrate metabolism; fructose metabolism. Its activity is regulated as follows. Requires potassium. Inhibition by ADP. Functionally, catalyzes the phosphorylation of the ketose sugar fructose to fructose-1-phosphate. The sequence is that of Ketohexokinase from Mus musculus (Mouse).